A 156-amino-acid polypeptide reads, in one-letter code: ATP synthase subunit b (156 aa).

The chain crosses the membrane as a helical span at residues 3–23 (ITLTIFAQALAFAGLIWIVAT).

Belongs to the ATPase B chain family. As to quaternary structure, F-type ATPases have 2 components, F(1) - the catalytic core - and F(0) - the membrane proton channel. F(1) has five subunits: alpha(3), beta(3), gamma(1), delta(1), epsilon(1). F(0) has three main subunits: a(1), b(2) and c(10-14). The alpha and beta chains form an alternating ring which encloses part of the gamma chain. F(1) is attached to F(0) by a central stalk formed by the gamma and epsilon chains, while a peripheral stalk is formed by the delta and b chains.

It localises to the cell inner membrane. Functionally, f(1)F(0) ATP synthase produces ATP from ADP in the presence of a proton or sodium gradient. F-type ATPases consist of two structural domains, F(1) containing the extramembraneous catalytic core and F(0) containing the membrane proton channel, linked together by a central stalk and a peripheral stalk. During catalysis, ATP synthesis in the catalytic domain of F(1) is coupled via a rotary mechanism of the central stalk subunits to proton translocation. Component of the F(0) channel, it forms part of the peripheral stalk, linking F(1) to F(0). This Xanthomonas oryzae pv. oryzae (strain MAFF 311018) protein is ATP synthase subunit b.